The chain runs to 928 residues: BCAS3 microtubule associated cell migration factor (928 aa).

The residue at position 1 (Met1) is an N-acetylmethionine. Residues 69 to 114 form a WD repeat; it reads DLNDTSRNLEFHEIHSTGNEPPLLIMIGYSDGMQVWSIPISGEAQE. Lys215 participates in a covalent cross-link: Glycyl lysine isopeptide (Lys-Gly) (interchain with G-Cter in SUMO1); alternate. Residue Lys215 forms a Glycyl lysine isopeptide (Lys-Gly) (interchain with G-Cter in SUMO2); alternate linkage. 2 required for recruitment to preautophagosomal structure in response to mitophagy regions span residues 254-312 and 437-560; these read RGGA…SRRS and YGGQ…IKAP. Phosphoserine is present on residues Ser461, Ser480, and Ser488. Disordered stretches follow at residues 472–515 and 755–777; these read TSKQ…PGNP and TTVISSSSSVLQSHGPSDTPQPL. 3 stretches are compositionally biased toward low complexity: residues 480-494, 505-514, and 755-771; these read SPVPGLSSSPSGSPL, NNFTNNNPGN, and TTVISSSSSVLQSHGPS. Residues Ser838, Ser886, and Ser898 each carry the phosphoserine modification. The disordered stretch occupies residues 868 to 928; sequence ESPSRDVVGS…PLSLFPTGFP (61 aa). The segment covering 887–901 has biased composition (low complexity); that stretch reads IETLSNSSGSTSGSI.

The protein belongs to the BCAS3 family. As to quaternary structure, interacts with histone H3, ESR1, KAT2B and PELP1; the interactions occur in a estrogen-dependent manner. Interacts with beta-tubulin and VIM. Interacts (via C-terminal) with PHAF1; the interaction is requrired for the association with the phagophore. In terms of tissue distribution, expressed in stomach, liver, lung, kidney, prostate, testis, thyroid gland, adrenal gland, brain, heart, skeletal muscle, colon, spleen, small intestine, placenta, blood leukocyte and mammary epithelial cells. Expressed in undifferentiated ES cells. Expressed in blood islands and nascent blood vessels derived from differentiated ES cells into embryoid bodies (BD). Expressed in endothelial cells. Not detected in brain. Expressed in brain tumors (at protein level). Expressed in brain. Highly expressed in breast cancers and in glioma cell lines.

The protein localises to the nucleus. It is found in the cytoplasm. The protein resides in the cytoskeleton. Its subcellular location is the preautophagosomal structure. Its function is as follows. Plays a role in angiogenesis. Participates in the regulation of cell polarity and directional endothelial cell migration by mediating both the activation and recruitment of CDC42 and the reorganization of the actin cytoskeleton at the cell leading edge. Promotes filipodia formation. Functions synergistically with PELP1 as a transcriptional coactivator of estrogen receptor-responsive genes. Stimulates histone acetyltransferase activity. Binds to chromatin. Plays a regulatory role in autophagic activity. In complex with PHAF1, associates with the preautophagosomal structure during both non-selective and selective autophagy. Probably binds phosphatidylinositol 3-phosphate (PtdIns3P) which would mediate the recruitment preautophagosomal structures. The protein is BCAS3 microtubule associated cell migration factor of Homo sapiens (Human).